The following is a 429-amino-acid chain: Cytochrome c biogenesis protein CcsB (429 aa).

3 helical membrane-spanning segments follow: residues 14 to 34 (LKVAIVLLILIALGSALGTAL), 72 to 92 (SFWFLFLLTWLSFSLIICSWK), and 162 to 182 (VGPPLVHFGLILLIIGATYGV).

Belongs to the Ccs1/CcsB family. May interact with CcsA.

Its subcellular location is the cellular thylakoid membrane. Functionally, required during biogenesis of c-type cytochromes (cytochrome c6 and cytochrome f) at the step of heme attachment. This chain is Cytochrome c biogenesis protein CcsB, found in Prochlorococcus marinus (strain SARG / CCMP1375 / SS120).